Here is a 279-residue protein sequence, read N- to C-terminus: Prostatic spermine-binding protein (279 aa).

The first 17 residues, 1-17 (MLLLVTLALLAGPTCRA), serve as a signal peptide directing secretion. Gln-18 is modified (pyrrolidone carboxylic acid). Positions 18–151 (QNILGNNVGT…LNGMGFKWKN (134 aa)) constitute a Jacalin-type lectin domain. Residue Asn-62 is glycosylated (N-linked (GlcNAc...) asparagine). 2 stretches are compositionally biased toward acidic residues: residues 160-177 (DDDKEDDDDEHDDDNEED) and 185-279 (NDHD…EEEE). The interval 160-279 (DDDKEDDDDE…DDDNGDEEEE (120 aa)) is disordered.

This sequence to mouse SBP. Prostate.

Functionally, spermine-binding protein is an androgen regulated ventral prostate glycoprotein that binds various polyamines. The sequence is that of Prostatic spermine-binding protein (Sbp) from Rattus norvegicus (Rat).